Here is a 195-residue protein sequence, read N- to C-terminus: Molybdenum cofactor guanylyltransferase (195 aa).

GTP is bound by residues 12 to 14, Lys25, Asn53, Asp70, and Asp100; that span reads LAG. Residue Asp100 participates in Mg(2+) binding.

It belongs to the MobA family. As to quaternary structure, monomer. Requires Mg(2+) as cofactor.

The protein resides in the cytoplasm. The enzyme catalyses Mo-molybdopterin + GTP + H(+) = Mo-molybdopterin guanine dinucleotide + diphosphate. In terms of biological role, transfers a GMP moiety from GTP to Mo-molybdopterin (Mo-MPT) cofactor (Moco or molybdenum cofactor) to form Mo-molybdopterin guanine dinucleotide (Mo-MGD) cofactor. The protein is Molybdenum cofactor guanylyltransferase of Vibrio vulnificus (strain YJ016).